Here is a 278-residue protein sequence, read N- to C-terminus: 4-deoxy-L-threo-5-hexosulose-uronate ketol-isomerase (278 aa).

Zn(2+) is bound by residues histidine 196, histidine 198, glutamate 203, and histidine 245.

It belongs to the KduI family. Zn(2+) is required as a cofactor.

The enzyme catalyses 5-dehydro-4-deoxy-D-glucuronate = 3-deoxy-D-glycero-2,5-hexodiulosonate. Its pathway is glycan metabolism; pectin degradation; 2-dehydro-3-deoxy-D-gluconate from pectin: step 4/5. In terms of biological role, catalyzes the isomerization of 5-dehydro-4-deoxy-D-glucuronate to 3-deoxy-D-glycero-2,5-hexodiulosonate. The sequence is that of 4-deoxy-L-threo-5-hexosulose-uronate ketol-isomerase from Shigella flexneri serotype 5b (strain 8401).